The sequence spans 1395 residues: G2/mitotic-specific cyclin-B3 (1395 aa).

Residues 1–59 (MLLPLPPQSSKPVPKKSQSSKIVPSHHDPSEKTGENCQTKISPSSLQESPSSLQGALKK) form a disordered region. Over residues 10–23 (SKPVPKKSQSSKIV) the composition is skewed to low complexity. Residues 25-34 (SHHDPSEKTG) are compositionally biased toward basic and acidic residues. Residues 42-54 (SPSSLQESPSSLQ) show a composition bias toward low complexity. The D-box signature appears at 60 to 68 (RSAFEDLTN). Disordered stretches follow at residues 418–464 (LSIK…PTEE) and 1074–1122 (ATMT…DSSD). Over residues 419–431 (SIKEKPSTEKESF) the composition is skewed to basic and acidic residues. Residues 1082–1093 (SRTTTESSACES) show a composition bias toward low complexity.

This sequence belongs to the cyclin family. Cyclin AB subfamily. Interacts with CDK2 kinase. In terms of processing, ubiquitinated. Ubiquitination leads to its degradation during anaphase entry, after degradation of CCNB1. Testis specific. In testis, it is expressed in developing germ cells, but not in Leydig cells. Weakly or not expressed in other tissues.

It localises to the nucleus. In terms of biological role, cyclins are positive regulatory subunits of the cyclin-dependent kinases (CDKs), and thereby play an essential role in the control of the cell cycle, notably via their destruction during cell division. Its tissue specificity suggest that it may be required during early meiotic prophase I. The chain is G2/mitotic-specific cyclin-B3 (CCNB3) from Homo sapiens (Human).